The following is a 172-amino-acid chain: Shikimate kinase (172 aa).

14–19 (GAGKST) is an ATP binding site. S18 lines the Mg(2+) pocket. Positions 36, 60, and 82 each coordinate substrate. R120 serves as a coordination point for ATP. Residue R139 coordinates substrate. Q156 is a binding site for ATP.

Belongs to the shikimate kinase family. As to quaternary structure, monomer. It depends on Mg(2+) as a cofactor.

It is found in the cytoplasm. It carries out the reaction shikimate + ATP = 3-phosphoshikimate + ADP + H(+). The protein operates within metabolic intermediate biosynthesis; chorismate biosynthesis; chorismate from D-erythrose 4-phosphate and phosphoenolpyruvate: step 5/7. In terms of biological role, catalyzes the specific phosphorylation of the 3-hydroxyl group of shikimic acid using ATP as a cosubstrate. This is Shikimate kinase from Aliivibrio fischeri (strain ATCC 700601 / ES114) (Vibrio fischeri).